The following is a 683-amino-acid chain: Phenoloxidase 3 (683 aa).

The propeptide occupies 1-48 (MADKKNLLLLFDHPTEPVFMDKGGNGTVFDVPASYVTDRYNKMCKKVQ). Residue asparagine 25 is glycosylated (N-linked (GlcNAc...) asparagine). Cu cation is bound by residues histidine 209, histidine 213, and histidine 239. Glutamate 351 serves as the catalytic Proton acceptor. N-linked (GlcNAc...) asparagine glycosylation is present at asparagine 358. Histidine 366, histidine 370, and histidine 406 together coordinate Cu cation. N-linked (GlcNAc...) asparagine glycosylation is found at asparagine 492 and asparagine 514. 2 disulfides stabilise this stretch: cysteine 574–cysteine 617 and cysteine 576–cysteine 624.

This sequence belongs to the tyrosinase family. Cu(2+) serves as cofactor. Post-translationally, upon activation, a trypsin type protease cleaves prophenol oxidase to yield the active enzyme.

Its subcellular location is the secreted. The catalysed reaction is 2 L-dopa + O2 = 2 L-dopaquinone + 2 H2O. It catalyses the reaction L-tyrosine + O2 = L-dopaquinone + H2O. Its function is as follows. This is a copper-containing oxidase that functions in the formation of pigments such as melanins and other polyphenolic compounds. Catalyzes the rate-limiting conversions of tyrosine to DOPA, DOPA to DOPA-quinone and possibly 5,6 dihydroxyindole to indole-5'6 quinone. The polypeptide is Phenoloxidase 3 (PPO3) (Drosophila erecta (Fruit fly)).